A 100-amino-acid chain; its full sequence is Integration host factor subunit alpha (100 aa).

Belongs to the bacterial histone-like protein family. Heterodimer of an alpha and a beta chain.

Its function is as follows. This protein is one of the two subunits of integration host factor, a specific DNA-binding protein that functions in genetic recombination as well as in transcriptional and translational control. The chain is Integration host factor subunit alpha from Caulobacter sp. (strain K31).